A 425-amino-acid polypeptide reads, in one-letter code: Dihydroorotase (425 aa).

The Zn(2+) site is built by His61 and His63. Substrate is bound by residues 63–65 (HLR) and Asn95. The Zn(2+) site is built by Asp153, His180, and His233. Position 279 (Asn279) interacts with substrate. Asp306 serves as a coordination point for Zn(2+). Asp306 is an active-site residue. Substrate is bound at residue His310.

This sequence belongs to the metallo-dependent hydrolases superfamily. DHOase family. Class I DHOase subfamily. It depends on Zn(2+) as a cofactor.

It catalyses the reaction (S)-dihydroorotate + H2O = N-carbamoyl-L-aspartate + H(+). It participates in pyrimidine metabolism; UMP biosynthesis via de novo pathway; (S)-dihydroorotate from bicarbonate: step 3/3. Its function is as follows. Catalyzes the reversible cyclization of carbamoyl aspartate to dihydroorotate. The chain is Dihydroorotase from Geobacter sulfurreducens (strain ATCC 51573 / DSM 12127 / PCA).